The following is a 533-amino-acid chain: DNA primase large subunit (533 aa).

Residues Cys298, Cys377, Cys393, and Cys433 each contribute to the [4Fe-4S] cluster site. The interval 466–492 (RQKRANGSAPPKARIRPDIKGHGDRSM) is disordered. Residues 480–490 (IRPDIKGHGDR) are compositionally biased toward basic and acidic residues.

It belongs to the eukaryotic-type primase large subunit family. As to quaternary structure, heterodimer of a catalytic subunit Prim1 and a regulatory subunit Prim2, also known as the DNA primase complex. Component of the alpha DNA polymerase complex (also known as the alpha DNA polymerase-primase complex) consisting of four subunits: the catalytic subunit PolA1, the regulatory subunit PolA2, and the primase complex subunits Prim1 and Prim2 respectively. PolA1 associates with the DNA primase complex before association with PolA2. It depends on [4Fe-4S] cluster as a cofactor. In terms of tissue distribution, expressed in embryos (at protein level).

Its function is as follows. Regulatory subunit of the DNA primase complex and component of the DNA polymerase alpha complex (also known as the alpha DNA polymerase-primase complex) which play an essential role in the initiation of DNA synthesis. During the S phase of the cell cycle, the DNA polymerase alpha complex (composed of a catalytic subunit PolA1, an accessory subunit PolA2 and two primase subunits, the catalytic subunit Prim1 and the regulatory subunit Prim2) is recruited to DNA at the replicative forks. The primase subunit of the polymerase alpha complex initiates DNA synthesis by oligomerising short RNA primers on both leading and lagging strands. These primers are initially extended by the polymerase alpha catalytic subunit and subsequently transferred to polymerase delta and polymerase epsilon for processive synthesis on the lagging and leading strand, respectively. In the primase complex, both subunits are necessary for the initial di-nucleotide formation, but the extension of the primer depends only on the catalytic subunit. Stabilizes and modulates the activity of the catalytic subunit. This chain is DNA primase large subunit, found in Drosophila melanogaster (Fruit fly).